The chain runs to 507 residues: Fluoroacetaldehyde dehydrogenase (507 aa).

219–225 (GFGIEAG) is a binding site for NAD(+). Active-site residues include Glu-263 and Cys-302.

It belongs to the aldehyde dehydrogenase family. As to quaternary structure, homotetramer.

It carries out the reaction fluoroacetaldehyde + NAD(+) + H2O = fluoroacetate + NADH + 2 H(+). Functionally, catalyzes the oxidation of fluoroacetaldehyde to fluoroacetate. Has high affinity for fluoroacetate and glycolaldehyde but not for acetaldehyde. In Streptantibioticus cattleyicolor (strain ATCC 35852 / DSM 46488 / JCM 4925 / NBRC 14057 / NRRL 8057) (Streptomyces cattleya), this protein is Fluoroacetaldehyde dehydrogenase.